The chain runs to 425 residues: Serine hydroxymethyltransferase (425 aa).

(6S)-5,6,7,8-tetrahydrofolate is bound by residues L125 and 129 to 131 (GHL). K234 bears the N6-(pyridoxal phosphate)lysine mark.

The protein belongs to the SHMT family. As to quaternary structure, homodimer. Requires pyridoxal 5'-phosphate as cofactor.

It localises to the cytoplasm. It carries out the reaction (6R)-5,10-methylene-5,6,7,8-tetrahydrofolate + glycine + H2O = (6S)-5,6,7,8-tetrahydrofolate + L-serine. Its pathway is one-carbon metabolism; tetrahydrofolate interconversion. It functions in the pathway amino-acid biosynthesis; glycine biosynthesis; glycine from L-serine: step 1/1. Functionally, catalyzes the reversible interconversion of serine and glycine with tetrahydrofolate (THF) serving as the one-carbon carrier. This reaction serves as the major source of one-carbon groups required for the biosynthesis of purines, thymidylate, methionine, and other important biomolecules. Also exhibits THF-independent aldolase activity toward beta-hydroxyamino acids, producing glycine and aldehydes, via a retro-aldol mechanism. This Marinomonas sp. (strain MWYL1) protein is Serine hydroxymethyltransferase.